The chain runs to 258 residues: GPI alpha-1,4-mannosyltransferase I, stabilizing subunit (258 aa).

Residues 1–21 (MAARVAAVRAAAWLLLGAATG) form the signal peptide. The Lumenal segment spans residues 22–230 (LTRGPAAAFT…PVGLTVHTSL (209 aa)). A glycan (N-linked (GlcNAc...) asparagine) is linked at N103. The chain crosses the membrane as a helical span at residues 231 to 251 (VCSVTLLITILCSTLILVAVF). Residues 252–258 (KYGHFSL) lie on the Cytoplasmic side of the membrane.

Belongs to the PIGX family. Part of the glycosylphosphatidylinositol-mannosyltransferase I complex that is composed of PIGM and PIGX. Interacts with PIGM; PIGX stabilizes PIGM.

The protein resides in the endoplasmic reticulum membrane. It participates in glycolipid biosynthesis; glycosylphosphatidylinositol-anchor biosynthesis. Stabilizing subunit of the glycosylphosphatidylinositol-mannosyltransferase I complex which catalyzes the transfer of the first mannose, via an alpha-1,4 bond from a dolichol-phosphate-mannose (Dol-P-Man) to the glucosaminyl acyl phosphatidylinositol (GlcN-(acyl)PI) intermediate to generate alpha-D-Man-(1-&gt;4)-alpha-D-GlcN-(1-&gt;6)-(1-radyl,2-acyl-sn-glycero-3-phospho)-2-acyl-inositol and participates in the sixth step of the glycosylphosphatidylinositol-anchor biosynthesis. Probably acts by stabilizing the mannosyltransferase PIGM. This Homo sapiens (Human) protein is GPI alpha-1,4-mannosyltransferase I, stabilizing subunit.